A 359-amino-acid polypeptide reads, in one-letter code: Membrane-bound lytic murein transglycosylase C (359 aa).

The signal sequence occupies residues 1 to 16 (MKKYLALALIAPLLIS). Cysteine 17 is lipidated: N-palmitoyl cysteine. Cysteine 17 carries S-diacylglycerol cysteine lipidation.

The protein belongs to the transglycosylase Slt family.

It is found in the cell outer membrane. It carries out the reaction Exolytic cleavage of the (1-&gt;4)-beta-glycosidic linkage between N-acetylmuramic acid (MurNAc) and N-acetylglucosamine (GlcNAc) residues in peptidoglycan, from either the reducing or the non-reducing ends of the peptidoglycan chains, with concomitant formation of a 1,6-anhydrobond in the MurNAc residue.. Its function is as follows. Murein-degrading enzyme. May play a role in recycling of muropeptides during cell elongation and/or cell division. In Escherichia coli O8 (strain IAI1), this protein is Membrane-bound lytic murein transglycosylase C.